Here is a 167-residue protein sequence, read N- to C-terminus: Large ribosomal subunit protein bL9 (167 aa).

It belongs to the bacterial ribosomal protein bL9 family.

Functionally, binds to the 23S rRNA. The protein is Large ribosomal subunit protein bL9 of Chlamydia muridarum (strain MoPn / Nigg).